A 675-amino-acid polypeptide reads, in one-letter code: Protein PALS1 (675 aa).

Disordered regions lie at residues 1 to 34 (MTTS…KHRE) and 51 to 78 (RRSA…KKQE). A required for the correct localization of PALS1 and PATJ at cell-cell contacts and the normal formation of tight junctions and adherens junctions region spans residues 1–345 (MTTSHMNGHV…QQIKPPPAKE (345 aa)). Basic and acidic residues-rich tracts occupy residues 10–34 (VTEE…KHRE) and 54–78 (AQLE…KKQE). 2 positions are modified to phosphoserine: Ser14 and Ser25. An interaction with PARD6B region spans residues 21 to 140 (VDLASPEEHQ…LKHIQHTLVD (120 aa)). A phosphoserine mark is found at Ser83 and Ser84. L27 domains lie at 120–177 (KILE…NKAS) and 179–235 (PFPL…MQLE). Residues 181–243 (PLISNAQDLA…LEPITDERVY (63 aa)) are interaction with LIN7C. The PDZ domain maps to 256 to 336 (IVRIEKARDI…TLTFVLIPSQ (81 aa)). The SH3 domain occupies 345-417 (ETVIHVKAHF…PGKSFQQQRE (73 aa)). A Guanylate kinase-like domain is found at 479-660 (KRPIILIGPQ…AYQELLRLIN (182 aa)). 486–493 (GPQNCGQN) is a binding site for ATP.

Belongs to the MAGUK family. As to quaternary structure, heterodimer with MPP1. Forms a heterotrimeric complex composed of PALS1, LIN7B and PATJ; the N-terminal L27 domain of PALS1 interacts with the L27 domain of PATJ and the C-terminal L27 domain of PALS1 interacts with the L27 domain of LIN7B. Component of a complex composed of PALS1, CRB1 and MPP4. Component of a complex whose core is composed of ARHGAP17, AMOT, PALS1, PATJ and PARD3/PAR3. Component of a complex composed of PALS1, CRB1 and EPB41L5. Within the complex, interacts (via HOOK domain) with EPB41L5 (via FERM domain), and interacts with CRB1 (via intracellular domain). Component of a complex composed of PALS1, MPP3 and CRB1; PALS1 acts as a bridging protein between MPP3 (via guanylate kinase-like domain) and CRB1. Component of a complex composed of CRB3, PALS1 and PATJ. As part of the Crumbs complex; interacts with WWP1, the interaction is enhanced by AMOTL2 and facilitates WWP1 localization to the plasma membrane. The Crumbs complex promotes monoubiquitination of AMOTL2 by WWP1, which activates the Hippo signaling pathway. Interacts (via PDZ domain) with PATJ (via N-terminus). Interacts with EZR. Interacts (via PDZ domain) with CRB1 (via C-terminal ERLI motif). While the PDZ domain is sufficient for interaction with CRB1, the adjacent SH3 and guanylate kinase-like domains are likely to contribute to a high affinity interaction. Interacts with WWTR1/TAZ (via WW domain). Interacts with MPP7. Interacts (via PDZ domain) with CRB3 (via C-terminus). Interacts with LIN7C. Interacts with MPDZ. Interacts with PARD6B. Interacts with SC6A1. Interacts with CDH5; the interaction promotes PALS1 localization to cell junctions and is required for CDH5-mediated vascular lumen formation and endothelial cell. Interacts with NPHP1 (via coiled coil and SH3 domains). Interacts with NPHP4. Interacts with CRB2. (Microbial infection) Interacts (via PDZ domain) with human coronaviruses SARS-CoV and, probably, SARS-CoV-2 envelope small membrane protein E (via C-terminus); this inhibits the interaction between PALS1 and CRB3. Expressed at the outer limiting membrane in the retina (at protein level). Expressed in T lymphocytes (at protein level). Expressed in the kidney (at protein level).

The protein localises to the golgi apparatus. Its subcellular location is the cell membrane. It is found in the endomembrane system. It localises to the cell junction. The protein resides in the tight junction. The protein localises to the adherens junction. Its subcellular location is the cell projection. It is found in the axon. It localises to the perikaryon. The protein resides in the apical cell membrane. The protein localises to the endoplasmic reticulum-Golgi intermediate compartment. Its function is as follows. Plays a role in tight junction biogenesis and in the establishment of cell polarity in epithelial cells. Also involved in adherens junction biogenesis by ensuring correct localization of the exocyst complex protein EXOC4/SEC8 which allows trafficking of adherens junction structural component CDH1 to the cell surface. Plays a role through its interaction with CDH5 in vascular lumen formation and endothelial membrane polarity. Required during embryonic and postnatal retinal development. Required for the maintenance of cerebellar progenitor cells in an undifferentiated proliferative state, preventing premature differentiation, and is required for cerebellar histogenesis, fissure formation, cerebellar layer organization and cortical development. Plays a role in neuronal progenitor cell survival, potentially via promotion of mTOR signaling. Plays a role in the radial and longitudinal extension of the myelin sheath in Schwann cells. May modulate SC6A1/GAT1-mediated GABA uptake by stabilizing the transporter. Plays a role in the T-cell receptor-mediated activation of NF-kappa-B. Required for localization of EZR to the apical membrane of parietal cells and may play a role in the dynamic remodeling of the apical cytoskeleton. Required for the normal polarized localization of the vesicular marker STX4. Required for the correct trafficking of the myelin proteins PMP22 and MAG. Involved in promoting phosphorylation and cytoplasmic retention of transcriptional coactivators YAP1 and WWTR1/TAZ which leads to suppression of TGFB1-dependent transcription of target genes such as CCN2/CTGF, SERPINE1/PAI1, SNAI1/SNAIL1 and SMAD7. (Microbial infection) Acts as an interaction partner for human coronaviruses SARS-CoV and, probably, SARS-CoV-2 envelope protein E which results in delayed formation of tight junctions and disregulation of cell polarity. The protein is Protein PALS1 of Homo sapiens (Human).